A 172-amino-acid chain; its full sequence is Photosystem I assembly protein Ycf3 (172 aa).

TPR repeat units lie at residues 35–68 (AFSYYRNGMSAQAEGEYAEALQNYYEAMRLEVDA), 72–105 (SYILYNIGLIHTSNGEHGRALEYYYQALERNPSL), and 120–153 (GEQAIENGQSEISQILFEKAADYWKEAIRLAPTN).

Belongs to the Ycf3 family.

Its subcellular location is the plastid. The protein resides in the chloroplast thylakoid membrane. In terms of biological role, essential for the assembly of the photosystem I (PSI) complex. May act as a chaperone-like factor to guide the assembly of the PSI subunits. This is Photosystem I assembly protein Ycf3 from Chlamydomonas reinhardtii (Chlamydomonas smithii).